The primary structure comprises 65 residues: Large ribosomal subunit protein uL29 (65 aa).

The protein belongs to the universal ribosomal protein uL29 family.

This chain is Large ribosomal subunit protein uL29, found in Delftia acidovorans (strain DSM 14801 / SPH-1).